The chain runs to 483 residues: Zinc metalloproteinase/disintegrin (483 aa).

The N-terminal stretch at 1–20 (MIQVLLVTLCLAAFPYQGSS) is a signal peptide. A propeptide spanning residues 21–190 (IILESGNVND…KKASQLNLTP (170 aa)) is cleaved from the precursor. Residues 198-394 (RYIELVVVAD…HNPQCMLNEP (197 aa)) enclose the Peptidase M12B domain. The Ca(2+) site is built by Glu201 and Asp285. Cystine bridges form between Cys309-Cys389, Cys349-Cys373, and Cys351-Cys356. His334 is a Zn(2+) binding site. Glu335 is a catalytic residue. Residues His338 and His344 each coordinate Zn(2+). Residues Cys389 and Asn392 each contribute to the Ca(2+) site. Positions 395–418 (LRTDIVSTPVSGNELLETGEESDF) are excised as a propeptide. One can recognise a Disintegrin domain in the interval 402–483 (TPVSGNELLE…AGCPRNPFHA (82 aa)). Cystine bridges form between Cys425–Cys448, Cys439–Cys445, Cys444–Cys469, and Cys457–Cys476. The short motif at 461 to 463 (RGD) is the Cell attachment site element.

The protein belongs to the venom metalloproteinase (M12B) family. P-II subfamily. P-IId sub-subfamily. In terms of assembly, homodimer; disulfide-linked (disintegrin). Zn(2+) is required as a cofactor. In terms of tissue distribution, expressed by the venom gland.

Its subcellular location is the secreted. In terms of biological role, impairs hemostasis in the envenomed animal. This protein has not been identified in the venom. Its function is as follows. Inhibits ADP-induced platelet aggregation. Binds and inhibits integrins GPIIb/GPIIIa (ITGA2B/ITGB3), alpha-5/beta-1 (ITGA5/ITGB1), alpha-V/beta-3 (ITGAV/ITGB3), and alpha-V/beta-5 (ITGAV/ITGB5). It blocks cancer cell adhesion (tested on human breast cancer cell line MDA-MB-435) to fibronectin and vitronectin and thus prevents invasion of cancer cells. The sequence is that of Zinc metalloproteinase/disintegrin from Agkistrodon contortrix contortrix (Southern copperhead).